The primary structure comprises 331 residues: L-lactate dehydrogenase A chain (331 aa).

NAD(+) contacts are provided by residues 29–57 and Arg98; that span reads GMVGMASAISILLKDLCDELAMVDVMEDK. Positions 105, 137, and 168 each coordinate substrate. Asn137 contacts NAD(+). His192 serves as the catalytic Proton acceptor. Thr247 lines the substrate pocket.

This sequence belongs to the LDH/MDH superfamily. LDH family. In terms of assembly, homotetramer.

It is found in the cytoplasm. The enzyme catalyses (S)-lactate + NAD(+) = pyruvate + NADH + H(+). Its pathway is fermentation; pyruvate fermentation to lactate; (S)-lactate from pyruvate: step 1/1. Interconverts simultaneously and stereospecifically pyruvate and lactate with concomitant interconversion of NADH and NAD(+). The chain is L-lactate dehydrogenase A chain (ldha) from Gobionotothen gibberifrons (Humped rockcod).